A 473-amino-acid chain; its full sequence is Vasculin (473 aa).

3 disordered regions span residues 1–25 (MAQH…SSLN), 45–169 (RRHN…KSRA), and 191–342 (VGNL…QERD). Ser-49 bears the Phosphoserine mark. The residue at position 87 (Arg-87) is an Omega-N-methylarginine. Over residues 93–107 (GSSRSRSSIFHSGKS) the composition is skewed to low complexity. Residues 119 to 133 (ETGRKEDKRERKQFE) are compositionally biased toward basic and acidic residues. Composition is skewed to polar residues over residues 194–204 (LPSQPVKNGTG) and 251–286 (AFKS…QQPR). A phosphoserine mark is found at Ser-274, Ser-276, Ser-322, and Ser-381. Residues 293 to 329 (MRTDKKSEFLKALKRDRVEEEHEDESRAGSEKDDDSF) show a composition bias toward basic and acidic residues. The interval 444–473 (GPWKNSTFKPTTENDDTETSSSDTSDDDDV) is disordered. Residues 456–473 (ENDDTETSSSDTSDDDDV) are compositionally biased toward acidic residues.

The protein belongs to the vasculin family. Interacts with GTF2B, GTF2F2, RNA polymerase II and TBP.

Its subcellular location is the nucleus. In terms of biological role, functions as a GC-rich promoter-specific transactivating transcription factor. The protein is Vasculin (GPBP1) of Pongo abelii (Sumatran orangutan).